Consider the following 382-residue polypeptide: uncharacterized protein (382 aa).

12 helical membrane passes run 8–28 (VLLLLCGLLLFTISIAVLNTL), 41–61 (WQVGMVSSSYFSGNLVGTLIA), 73–93 (SYHYSCILFALATCGLMLSVD), 94–114 (FWSWLGWRFFAGVACALIWVI), 133–153 (AAYMMVYYLGTVTGQLLLGVV), 157–177 (LLSVIPWVSALVITAMLPLLF), 208–228 (GCIISGVLLGSLYGLLPLYLS), 235–255 (ASVGWWMALLVSSGIIGQWPI), 274–294 (VVILGSIAILGNYALAPALFI), 295–315 (LGCAGFTLYPVAMAWACEKVS), 325–345 (ALLMSYTIGSLTGPTMTSLLM), and 349–369 (SDNLLFIMIAGVALVYLMMLL).

This sequence belongs to the major facilitator superfamily. YcaD (TC 2.A.1.26) family.

It is found in the cell inner membrane. This is an uncharacterized protein from Yersinia enterocolitica serotype O:8 / biotype 1B (strain NCTC 13174 / 8081).